A 527-amino-acid polypeptide reads, in one-letter code: Succinate-semialdehyde dehydrogenase, mitochondrial (527 aa).

The N-terminal 35 residues, 1–35 (MAMAMAMRRAAALGARHILAASSTSSSGVLLRRHM), are a transit peptide targeting the mitochondrion. Residues R208, 223–226 (KPSE), and 276–281 (GSTAVG) contribute to the NAD(+) site. R208 contacts substrate. Catalysis depends on E298, which acts as the Proton acceptor. Positions 326, 332, and 489 each coordinate substrate. C332 acts as the Nucleophile in catalysis. Cysteines 332 and 334 form a disulfide.

It belongs to the aldehyde dehydrogenase family. As to quaternary structure, homotetramer.

Its subcellular location is the mitochondrion matrix. The enzyme catalyses succinate semialdehyde + NAD(+) + H2O = succinate + NADH + 2 H(+). It functions in the pathway amino-acid degradation; 4-aminobutanoate degradation. With respect to regulation, redox-regulated. Inhibited under oxydizing conditions. Functionally, oxidizes specifically succinate semialdehyde. Involved in plant response to environmental stress by preventing the accumulation of reactive oxygen species. The chain is Succinate-semialdehyde dehydrogenase, mitochondrial (ALDH5F1) from Oryza sativa subsp. japonica (Rice).